The chain runs to 705 residues: SPbeta prophage-derived sublancin-168-processing and transport ATP-binding protein SunT (705 aa).

Positions 12–138 constitute a Peptidase C39 domain; it reads QFNSHDCGLA…SKFTNFILEI (127 aa). C18 is a catalytic residue. 6 helical membrane passes run 167-187, 205-225, 281-301, 306-326, 388-408, and 418-438; these read IVFVILLTSLFVVGLAVAGSF, LITITLIFISMVLIRCIFDFV, ANFVTAIIDIILILGLGVILY, ILFLTIILPILLLSCLAILFF, VISNEILKGLIQNSFTIIILW, and SMSLGTLLFINTLAAFLLSSL. Positions 168–450 constitute an ABC transmembrane type-1 domain; sequence VFVILLTSLF…ILSMQSDLQQ (283 aa). Positions 483–705 constitute an ABC transporter domain; it reads IKTVNLNIGA…SYSENKEYSI (223 aa). Position 516–523 (516–523) interacts with ATP; it reads GESGTGKS.

It belongs to the ABC transporter superfamily. SunT family. As to quaternary structure, homodimer.

It is found in the cell membrane. In terms of biological role, sunT (TC 3.A.1.112.4) is required for production of the lantibiotic sublancin-168, probably by both processing the signal peptide and exporting the resulting mature lantibiotic. The protein is SPbeta prophage-derived sublancin-168-processing and transport ATP-binding protein SunT (sunT) of Bacillus subtilis (strain 168).